Reading from the N-terminus, the 291-residue chain is Protein ZAR1-like (291 aa).

The interval G103 to T152 is disordered. Residues T106–R115 show a composition bias toward low complexity. The span at T116–R129 shows a compositional bias: basic and acidic residues. A 3CxxC-type zinc finger spans residues L195–K280.

This sequence belongs to the ZAR1 family. In terms of assembly, interacts with YBX2. In terms of tissue distribution, expressed in oocytes and zygotes. Predominantly expressed in maturing oocytes before maternal-to-zygotic transition (MZT). Less abundant than Zar1.

The protein resides in the cytoplasm. The protein localises to the cytoplasmic ribonucleoprotein granule. Functionally, mRNA-binding protein required for maternal mRNA storage, translation and degradation during oocyte maturation. Probably promotes formation of some phase-separated membraneless compartment that stores maternal mRNAs in oocytes: acts by undergoing liquid-liquid phase separation upon binding to maternal mRNAs. Binds to the 3'-UTR of maternal mRNAs, inhibiting their translation. The sequence is that of Protein ZAR1-like from Mus musculus (Mouse).